Here is a 226-residue protein sequence, read N- to C-terminus: tRNA (guanine-N(1)-)-methyltransferase (226 aa).

S-adenosyl-L-methionine is bound by residues glycine 112 and 132–137; that span reads IGDYVL.

This sequence belongs to the RNA methyltransferase TrmD family. In terms of assembly, homodimer.

Its subcellular location is the cytoplasm. The catalysed reaction is guanosine(37) in tRNA + S-adenosyl-L-methionine = N(1)-methylguanosine(37) in tRNA + S-adenosyl-L-homocysteine + H(+). Specifically methylates guanosine-37 in various tRNAs. The chain is tRNA (guanine-N(1)-)-methyltransferase from Flavobacterium johnsoniae (strain ATCC 17061 / DSM 2064 / JCM 8514 / BCRC 14874 / CCUG 350202 / NBRC 14942 / NCIMB 11054 / UW101) (Cytophaga johnsonae).